The primary structure comprises 419 residues: MNLTALKNMPVSELITLGEKMGLENLARMRKQDIIFAILKQHAKSGEDIFGDGVLEILQDGFGFLRSADSSYLAGPDDIYVSPSQIRRFNLRTGDTIAGKIRPPKEGERYFALLKVNEVNYDKPENARSKILFENLTPLHANSRLRMERGNGSTEDLTARVLDLASPIGRGQRGLIVAPPKAGKTILLQNIAQSIAYNHPDCVLMVLLIDERPEEVTEMQRLVKGEVVASTFDEPASRHVQVAEMVIEKAKRLVEHKKDVIILLDSITRLARAYNTVVPASGKVLTGGVDANALHRPKRFFGAARNVEEGGSLTIIATALVDTGSKMDEVIYEEFKGTGNMELPLSRKIAEKRVFPAIDYNRSGTRKEELLTLPDELQKMWILRKIIHPMSEIDAMEFLLNKLAMTKTNDEFFDMMKRS.

One can recognise a Rho RNA-BD domain in the interval 48–123; it reads DIFGDGVLEI…LKVNEVNYDK (76 aa). RNA-binding regions lie at residues 61–66, 78–80, and 108–110; these read GFGFLR, DIY, and ERY. Residues 169-174, 181-186, and R212 each bind ATP; these read GRGQRG and KAGKTI. The segment at 284–288 is RNA-binding 2; it reads VLTGG.

The protein belongs to the Rho family. As to quaternary structure, homohexamer. The homohexamer assembles into an open ring structure.

Functionally, facilitates transcription termination by a mechanism that involves Rho binding to the nascent RNA, activation of Rho's RNA-dependent ATPase activity, and release of the mRNA from the DNA template. This chain is Transcription termination factor Rho, found in Buchnera aphidicola subsp. Acyrthosiphon pisum (strain APS) (Acyrthosiphon pisum symbiotic bacterium).